The following is a 216-amino-acid chain: Adenylate kinase (216 aa).

Residue 10 to 15 participates in ATP binding; that stretch reads GAGKGT. Residues 30–59 form an NMP region; that stretch reads STGDMLRAAVAAGTEVGKRAKAVMDAGKLV. AMP is bound by residues threonine 31, arginine 36, 57–59, 85–88, and glutamine 92; these read KLV and GFPR. Residues 126–163 are LID; sequence GRYTCANCGAGYHDENLRPKVEGVCDRCGSTHFKRRAD. Arginine 127 serves as a coordination point for ATP. Residues cysteine 130, cysteine 133, cysteine 150, and cysteine 153 each coordinate Zn(2+). AMP contacts are provided by arginine 160 and arginine 172. Alanine 200 lines the ATP pocket.

Belongs to the adenylate kinase family. Monomer.

Its subcellular location is the cytoplasm. The catalysed reaction is AMP + ATP = 2 ADP. It functions in the pathway purine metabolism; AMP biosynthesis via salvage pathway; AMP from ADP: step 1/1. Its function is as follows. Catalyzes the reversible transfer of the terminal phosphate group between ATP and AMP. Plays an important role in cellular energy homeostasis and in adenine nucleotide metabolism. The chain is Adenylate kinase from Rhizobium rhizogenes (strain K84 / ATCC BAA-868) (Agrobacterium radiobacter).